The chain runs to 109 residues: FK506-binding protein (109 aa).

The 89-residue stretch at 20-108 folds into the PPIase FKBP-type domain; sequence GKEITVHYTG…IFEVELLKVY (89 aa).

Belongs to the FKBP-type PPIase family.

It catalyses the reaction [protein]-peptidylproline (omega=180) = [protein]-peptidylproline (omega=0). With respect to regulation, inhibited by FK506. Its function is as follows. PPIases accelerate the folding of proteins. The sequence is that of FK506-binding protein (fbp) from Neisseria meningitidis serogroup A / serotype 4A (strain DSM 15465 / Z2491).